The sequence spans 343 residues: L-threonine 3-dehydrogenase (343 aa).

Cys40 lines the Zn(2+) pocket. Active-site charge relay system residues include Thr42 and His45. Zn(2+) contacts are provided by His65, Glu66, Cys95, Cys98, Cys101, and Cys109. NAD(+) contacts are provided by residues Ile177, Asp197, Arg202, 264–266, and 288–289; these read LGI and IY.

This sequence belongs to the zinc-containing alcohol dehydrogenase family. Homotetramer. The cofactor is Zn(2+).

The protein resides in the cytoplasm. The catalysed reaction is L-threonine + NAD(+) = (2S)-2-amino-3-oxobutanoate + NADH + H(+). The protein operates within amino-acid degradation; L-threonine degradation via oxydo-reductase pathway; glycine from L-threonine: step 1/2. Catalyzes the NAD(+)-dependent oxidation of L-threonine to 2-amino-3-ketobutyrate. In Vibrio atlanticus (strain LGP32) (Vibrio splendidus (strain Mel32)), this protein is L-threonine 3-dehydrogenase.